The chain runs to 318 residues: Olfactory receptor-like protein COR1 (318 aa).

At 1–26 (MASGNCTTPTTFILSGLTDNPGLQMP) the chain is on the extracellular side. The N-linked (GlcNAc...) asparagine glycan is linked to Asn5. Residues 27–49 (LFMVFLAIYTITLLTNLGLIALI) form a helical membrane-spanning segment. The Cytoplasmic portion of the chain corresponds to 50 to 57 (SVDLHLQT). Residues 58-79 (PMYIFLQNLSFTDAAYSTVITP) form a helical membrane-spanning segment. Over 80–100 (KMLATFLEERKTISYVGCILQ) the chain is Extracellular. A disulfide bond links Cys97 and Cys179. Residues 101–120 (YFSFVLLTVTESLLLAVMAY) traverse the membrane as a helical segment. Over 121–139 (DRYVAICKPLLYPSIMTKA) the chain is Cytoplasmic. A helical membrane pass occupies residues 140–164 (VCWRLVESLYFLAFLNSLVHTSGLL). At 165 to 205 (KLSFCYSNVVNHFFCDISPLFQISSSSIAISELLVIISGSL) the chain is on the extracellular side. Residues 206 to 226 (FVMSSIIIILISYVFIILTVV) form a helical membrane-spanning segment. The Cytoplasmic portion of the chain corresponds to 227–239 (MIRSKDGKYKAFS). Residues 240–260 (TCTSHLMAVSLFHGTVIFMYL) traverse the membrane as a helical segment. Residues 261–271 (RPVKLFSLDTD) lie on the Extracellular side of the membrane. A helical transmembrane segment spans residues 272–292 (KIASLFYTVVIPMLNPLIYSW). Topologically, residues 293–318 (RNKEVKDALRRLTATTFGFIDSKAVQ) are cytoplasmic.

It belongs to the G-protein coupled receptor 1 family.

It is found in the cell membrane. Its function is as follows. Odorant receptor. The chain is Olfactory receptor-like protein COR1 (COR1) from Gallus gallus (Chicken).